The chain runs to 356 residues: sn-glycerol-3-phosphate import ATP-binding protein UgpC (356 aa).

The ABC transporter domain maps to 4–235 (LKLQAVTKSW…PASRFVASFI (232 aa)). An ATP-binding site is contributed by 37–44 (GPSGCGKS).

This sequence belongs to the ABC transporter superfamily. sn-glycerol-3-phosphate importer (TC 3.A.1.1.3) family. As to quaternary structure, the complex is composed of two ATP-binding proteins (UgpC), two transmembrane proteins (UgpA and UgpE) and a solute-binding protein (UgpB).

The protein localises to the cell inner membrane. The catalysed reaction is sn-glycerol 3-phosphate(out) + ATP + H2O = sn-glycerol 3-phosphate(in) + ADP + phosphate + H(+). In terms of biological role, part of the ABC transporter complex UgpBAEC involved in sn-glycerol-3-phosphate (G3P) import. Responsible for energy coupling to the transport system. This is sn-glycerol-3-phosphate import ATP-binding protein UgpC from Salmonella paratyphi A (strain ATCC 9150 / SARB42).